The chain runs to 316 residues: 4-hydroxy-3-methylbut-2-enyl diphosphate reductase (316 aa).

C12 lines the [4Fe-4S] cluster pocket. 2 residues coordinate (2E)-4-hydroxy-3-methylbut-2-enyl diphosphate: H41 and H74. Dimethylallyl diphosphate-binding residues include H41 and H74. Isopentenyl diphosphate contacts are provided by H41 and H74. Residue C96 coordinates [4Fe-4S] cluster. H124 contacts (2E)-4-hydroxy-3-methylbut-2-enyl diphosphate. H124 contributes to the dimethylallyl diphosphate binding site. An isopentenyl diphosphate-binding site is contributed by H124. E126 functions as the Proton donor in the catalytic mechanism. T169 provides a ligand contact to (2E)-4-hydroxy-3-methylbut-2-enyl diphosphate. A [4Fe-4S] cluster-binding site is contributed by C199. Positions 227, 228, 229, and 271 each coordinate (2E)-4-hydroxy-3-methylbut-2-enyl diphosphate. The dimethylallyl diphosphate site is built by S227, S228, N229, and S271. Isopentenyl diphosphate is bound by residues S227, S228, N229, and S271.

This sequence belongs to the IspH family. The cofactor is [4Fe-4S] cluster.

It carries out the reaction isopentenyl diphosphate + 2 oxidized [2Fe-2S]-[ferredoxin] + H2O = (2E)-4-hydroxy-3-methylbut-2-enyl diphosphate + 2 reduced [2Fe-2S]-[ferredoxin] + 2 H(+). The catalysed reaction is dimethylallyl diphosphate + 2 oxidized [2Fe-2S]-[ferredoxin] + H2O = (2E)-4-hydroxy-3-methylbut-2-enyl diphosphate + 2 reduced [2Fe-2S]-[ferredoxin] + 2 H(+). It functions in the pathway isoprenoid biosynthesis; dimethylallyl diphosphate biosynthesis; dimethylallyl diphosphate from (2E)-4-hydroxy-3-methylbutenyl diphosphate: step 1/1. It participates in isoprenoid biosynthesis; isopentenyl diphosphate biosynthesis via DXP pathway; isopentenyl diphosphate from 1-deoxy-D-xylulose 5-phosphate: step 6/6. Catalyzes the conversion of 1-hydroxy-2-methyl-2-(E)-butenyl 4-diphosphate (HMBPP) into a mixture of isopentenyl diphosphate (IPP) and dimethylallyl diphosphate (DMAPP). Acts in the terminal step of the DOXP/MEP pathway for isoprenoid precursor biosynthesis. This chain is 4-hydroxy-3-methylbut-2-enyl diphosphate reductase, found in Stenotrophomonas maltophilia (strain K279a).